A 108-amino-acid chain; its full sequence is Small ribosomal subunit protein uS10 (108 aa).

It belongs to the universal ribosomal protein uS10 family. Part of the 30S ribosomal subunit.

In terms of biological role, involved in the binding of tRNA to the ribosomes. The polypeptide is Small ribosomal subunit protein uS10 (Mycoplasma pneumoniae (strain ATCC 29342 / M129 / Subtype 1) (Mycoplasmoides pneumoniae)).